The sequence spans 166 residues: Protein SprT (166 aa).

The region spanning 20–164 is the SprT-like domain; it reads EHLANANRKL…CVRCGDLLVA (145 aa). A Zn(2+)-binding site is contributed by His78. The active site involves Glu79. His82 lines the Zn(2+) pocket.

This sequence belongs to the SprT family. The cofactor is Zn(2+).

Its subcellular location is the cytoplasm. The sequence is that of Protein SprT from Klebsiella pneumoniae subsp. pneumoniae (strain ATCC 700721 / MGH 78578).